The following is a 243-amino-acid chain: NAD-dependent protein deacetylase (243 aa).

A Deacetylase sirtuin-type domain is found at 1–243 (MKHDLETLKH…VSVVKSLMTE (243 aa)). Residues alanine 24, phenylalanine 35, arginine 36, glutamine 105, isoleucine 107, aspartate 108, and histidine 123 each contribute to the NAD(+) site. Phenylalanine 35 is a nicotinamide binding site. Nicotinamide is bound by residues isoleucine 107 and aspartate 108. The active-site Proton acceptor is the histidine 123. Residues cysteine 131, cysteine 134, cysteine 151, and cysteine 154 each coordinate Zn(2+). NAD(+)-binding residues include serine 192, serine 193, asparagine 215, and aspartate 232.

Belongs to the sirtuin family. Class U subfamily. The cofactor is Zn(2+).

Its subcellular location is the cytoplasm. The enzyme catalyses N(6)-acetyl-L-lysyl-[protein] + NAD(+) + H2O = 2''-O-acetyl-ADP-D-ribose + nicotinamide + L-lysyl-[protein]. In terms of biological role, NAD-dependent protein deacetylase which modulates the activities of several enzymes which are inactive in their acetylated form. The protein is NAD-dependent protein deacetylase of Staphylococcus aureus (strain NCTC 8325 / PS 47).